The following is a 476-amino-acid chain: RuvB-like 1 (476 aa).

The tract at residues 1–23 (MDMEVDEAISGTSSSRLAPIEEV) is disordered. 89–96 (GPPATGKT) lines the ATP pocket.

It belongs to the RuvB family. Forms homohexameric rings. May form a dodecamer with ruvb-2 made of two stacked hexameric rings. In terms of tissue distribution, expressed in gonadal cells.

It is found in the cytoplasm. The protein resides in the nucleus. The enzyme catalyses ATP + H2O = ADP + phosphate + H(+). Its function is as follows. Possesses single-stranded DNA-stimulated ATPase and ATP dependent DNA helicase (3' to 5') activity suggesting a role in nuclear processes such as recombination and transcription. May participate in several chromatin remodeling complexes that mediate the ATP-dependent exchange of histones and remodel chromatin by shifting nucleosomes. Involvement in these complexes is likely required for transcriptional activation of selected genes and DNA repair in response to DNA damage. Involved in the Ce-Tor signaling pathway whereby it is required for the accumulation and localization of box C/D snoRNP to nucleoli to regulate ribosomal maturation and thus protein synthesis. Antagonizes the transcriptional activity of transcription factor pha-4, to control postembryonic development and adult longevity. Has a role in pharyngeal development. Has a role in gonadal development. The protein is RuvB-like 1 of Caenorhabditis elegans.